A 505-amino-acid polypeptide reads, in one-letter code: Maturase K (505 aa).

It belongs to the intron maturase 2 family. MatK subfamily.

It localises to the plastid. Its subcellular location is the chloroplast. Functionally, usually encoded in the trnK tRNA gene intron. Probably assists in splicing its own and other chloroplast group II introns. This is Maturase K from Morus indica (Mulberry).